Reading from the N-terminus, the 70-residue chain is Small ribosomal subunit protein bS21 (70 aa).

It belongs to the bacterial ribosomal protein bS21 family.

The protein is Small ribosomal subunit protein bS21 of Helicobacter acinonychis (strain Sheeba).